Consider the following 245-residue polypeptide: Probable phosphatase KPN78578_10290 (245 aa).

The Zn(2+) site is built by histidine 7, histidine 9, histidine 15, histidine 40, glutamate 73, histidine 101, histidine 131, aspartate 192, and histidine 194.

Belongs to the PHP family. In terms of assembly, homotrimer. It depends on Zn(2+) as a cofactor.

This Klebsiella pneumoniae subsp. pneumoniae (strain ATCC 700721 / MGH 78578) protein is Probable phosphatase KPN78578_10290.